Reading from the N-terminus, the 143-residue chain is Small ribosomal subunit protein eS19y (143 aa).

This sequence belongs to the eukaryotic ribosomal protein eS19 family.

The sequence is that of Small ribosomal subunit protein eS19y (RPS19B) from Arabidopsis thaliana (Mouse-ear cress).